The chain runs to 193 residues: Acyl-homoserine-lactone synthase (193 aa).

This sequence belongs to the autoinducer synthase family.

It catalyses the reaction a fatty acyl-[ACP] + S-adenosyl-L-methionine = an N-acyl-L-homoserine lactone + S-methyl-5'-thioadenosine + holo-[ACP] + H(+). Functionally, required for the synthesis of OHHL (N-(3-oxohexanoyl)-L-homoserine lactone) also known as VAI or N-(beta-ketocaproyl)homoserine lactone or 3-oxo-N-(tetrahydro-2-oxo-3-furanyl)-hexanamide, an autoinducer molecule which binds to LuxR and thus acts in bioluminescence regulation. The sequence is that of Acyl-homoserine-lactone synthase (luxI) from Aliivibrio fischeri (Vibrio fischeri).